The sequence spans 317 residues: Melanocyte-stimulating hormone receptor (317 aa).

Over 1-37 (MPMQGAQRRLLGSLNSTPTATPNLGLAANHTGAPCLE) the chain is Extracellular. Asn29 carries N-linked (GlcNAc...) asparagine glycosylation. The helical transmembrane segment at 38–63 (VSIPHGLFLSLGLVSLVENVLVVAAI) threads the bilayer. The Cytoplasmic segment spans residues 64–72 (AKNRNLHSP). The chain crosses the membrane as a helical span at residues 73-93 (MYCFICCLALSDLLVSGSNML). The Extracellular portion of the chain corresponds to 94-118 (ETAVILLLEAGALATRASVVQQLQN). A helical membrane pass occupies residues 119-140 (TIDVLTCSSMLCSLCFLGAIAV). The Cytoplasmic segment spans residues 141–163 (DRYVSIFYALRYHSIVTLPRARR). Residues 164 to 183 (AIAAIWVASVLSSTLFIAYC) traverse the membrane as a helical segment. The Extracellular portion of the chain corresponds to 184–191 (DHAAVLLC). The helical transmembrane segment at 192–211 (LVVFFLAMLVLMAVLYVHML) threads the bilayer. Residues 212–240 (ARACQHAQGITRLHKRQLPAHQGFGLRGA) are Cytoplasmic-facing. The chain crosses the membrane as a helical span at residues 241 to 266 (ATLTILLGIFFLCWGPFFLHLMLVVL). Topologically, residues 267–279 (CPQHLTCSCIFKN) are extracellular. A helical transmembrane segment spans residues 280 to 300 (FKVFLTLIICNTIIDPLIYAF). The Cytoplasmic portion of the chain corresponds to 301-317 (RSQELCRTLKEVLLCSW). A lipid anchor (S-palmitoyl cysteine) is attached at Cys315.

This sequence belongs to the G-protein coupled receptor 1 family. In terms of assembly, interacts with MGRN1, but does not undergo MGRN1-mediated ubiquitination; this interaction competes with GNAS-binding and thus inhibits agonist-induced cAMP production. Interacts with OPN3; the interaction results in a decrease in MC1R-mediated cAMP signaling and ultimately a decrease in melanin production in melanocytes.

It is found in the cell membrane. In terms of biological role, receptor for MSH (alpha, beta and gamma) and ACTH. The activity of this receptor is mediated by G proteins which activate adenylate cyclase. Mediates melanogenesis, the production of eumelanin (black/brown) and phaeomelanin (red/yellow), via regulation of cAMP signaling in melanocytes. In Alouatta caraya (Black howler monkey), this protein is Melanocyte-stimulating hormone receptor (MC1R).